Consider the following 116-residue polypeptide: Protein Wnt-5b (116 aa).

S1 carries the O-palmitoleoyl serine; by PORCN lipid modification. N-linked (GlcNAc...) asparagine glycosylation is found at N69 and N83. A disulfide bridge links C82 with C97.

The protein belongs to the Wnt family. Post-translationally, palmitoleoylation is required for efficient binding to frizzled receptors. Depalmitoleoylation leads to Wnt signaling pathway inhibition.

The protein localises to the secreted. Its subcellular location is the extracellular space. It is found in the extracellular matrix. Its function is as follows. Ligand for members of the frizzled family of seven transmembrane receptors. Probable developmental protein. May be a signaling molecule which affects the development of discrete regions of tissues. Is likely to signal over only few cell diameters. The chain is Protein Wnt-5b (WNT-5B) from Alopias vulpinus (Common thresher shark).